Here is a 439-residue protein sequence, read N- to C-terminus: Tol-Pal system protein TolB (439 aa).

An N-terminal signal peptide occupies residues 1 to 22 (MTKFPRWLAMLVGLLFPLSALT).

It belongs to the TolB family. As to quaternary structure, the Tol-Pal system is composed of five core proteins: the inner membrane proteins TolA, TolQ and TolR, the periplasmic protein TolB and the outer membrane protein Pal. They form a network linking the inner and outer membranes and the peptidoglycan layer.

The protein localises to the periplasm. Part of the Tol-Pal system, which plays a role in outer membrane invagination during cell division and is important for maintaining outer membrane integrity. This is Tol-Pal system protein TolB from Xylella fastidiosa (strain 9a5c).